Reading from the N-terminus, the 234-residue chain is Uridylate kinase (234 aa).

Residue 10–11 (GS) participates in ATP binding. Residue glycine 44 participates in UMP binding. Positions 45 and 49 each coordinate ATP. UMP-binding positions include aspartate 66 and 114–120 (ITPGQTT). 3 residues coordinate ATP: threonine 140, tyrosine 146, and aspartate 149.

Belongs to the UMP kinase family. In terms of assembly, homohexamer.

It localises to the cytoplasm. The catalysed reaction is UMP + ATP = UDP + ADP. The protein operates within pyrimidine metabolism; CTP biosynthesis via de novo pathway; UDP from UMP (UMPK route): step 1/1. Inhibited by UTP. Catalyzes the reversible phosphorylation of UMP to UDP. In Methanoregula boonei (strain DSM 21154 / JCM 14090 / 6A8), this protein is Uridylate kinase.